The sequence spans 392 residues: Spermatogenesis associated 6-like protein (392 aa).

Phosphoserine occurs at positions 260 and 263. Positions 286-301 (SCLDSSQFGKSSSSKQ) are enriched in low complexity. Residues 286 to 305 (SCLDSSQFGKSSSSKQGDAD) form a disordered region.

Belongs to the SPATA6 family.

This Homo sapiens (Human) protein is Spermatogenesis associated 6-like protein (SPATA6L).